Here is a 272-residue protein sequence, read N- to C-terminus: Shikimate dehydrogenase (NADP(+)) (272 aa).

Residues 14-16 (SKS) and Thr61 each bind shikimate. The active-site Proton acceptor is Lys65. NADP(+) is bound at residue Glu77. Shikimate-binding residues include Asn86 and Asp102. NADP(+)-binding positions include 126–130 (GAGGA), 149–154 (NRTVSR), and Met213. Position 215 (Tyr215) interacts with shikimate. Gly237 contacts NADP(+).

The protein belongs to the shikimate dehydrogenase family. Homodimer.

It catalyses the reaction shikimate + NADP(+) = 3-dehydroshikimate + NADPH + H(+). It functions in the pathway metabolic intermediate biosynthesis; chorismate biosynthesis; chorismate from D-erythrose 4-phosphate and phosphoenolpyruvate: step 4/7. In terms of biological role, involved in the biosynthesis of the chorismate, which leads to the biosynthesis of aromatic amino acids. Catalyzes the reversible NADPH linked reduction of 3-dehydroshikimate (DHSA) to yield shikimate (SA). The polypeptide is Shikimate dehydrogenase (NADP(+)) (Escherichia coli O45:K1 (strain S88 / ExPEC)).